Consider the following 433-residue polypeptide: PHO85 cyclin-10 (433 aa).

Basic and acidic residues predominate over residues 1 to 10; the sequence is MDMTKNHTTD. 2 disordered regions span residues 1–20 and 51–81; these read MDMT…GDIR and LTSE…TTDS. Polar residues predominate over residues 51 to 63; that stretch reads LTSEWDQSRSNTP.

Belongs to the cyclin family. PHO80 subfamily. Forms a cyclin-CDK complex with PHO85. Interacts with GSY2, independent of the presence of PHO85.

The protein resides in the cytoplasm. Cyclin partner of the cyclin-dependent kinase (CDK) PHO85. Together with cyclin PCL8, negatively controls glycogen accumulation under favorable growth conditions. The PCL10-PHO85 cyclin-CDK holoenzyme has glycogen synthase kinase activity and phosphorylates and negatively regulates glycogen synthase GSY2. Also has minor GLC8 kinase activity. In Saccharomyces cerevisiae (strain ATCC 204508 / S288c) (Baker's yeast), this protein is PHO85 cyclin-10 (PCL10).